Reading from the N-terminus, the 603-residue chain is Geraniol synthase Tps-5073G30, chloroplastic (603 aa).

Residues 1–35 (MCSISQKVVIGLNKAAANNNLQNLDRRGFKTRCVS) constitute a chloroplast transit peptide. R319, D356, D360, R497, and D500 together coordinate (2E)-geranyl diphosphate. Positions 356 and 360 each coordinate Mg(2+). The DDXXD motif motif lies at 356 to 360 (DDVYD). Positions 500, 504, and 508 each coordinate Mg(2+).

It belongs to the terpene synthase family. Tpsb subfamily. Monomer. It depends on Mg(2+) as a cofactor. Requires Mn(2+) as cofactor.

The protein resides in the plastid. The protein localises to the chloroplast. The enzyme catalyses (2E)-geranyl diphosphate + H2O = (2E)-geraniol + diphosphate. Its pathway is secondary metabolite biosynthesis; terpenoid biosynthesis. Its function is as follows. Monoterpene synthase (mono-TPS) involved in the biosynthesis of monoterpenes natural products. Catalyzes the conversion of (2E)-geranyl diphosphate (GPP) into geraniol. This chain is Geraniol synthase Tps-5073G30, chloroplastic, found in Perilla frutescens (Beefsteak mint).